The chain runs to 279 residues: Ethanolamine utilization protein EutJ (279 aa).

Belongs to the EutJ family.

The protein operates within amine and polyamine degradation; ethanolamine degradation. May protect ethanolamine ammonia-lyase (EAL, eutB-eutC) from inhibition, may function in assembling the bacterial microcompartment and/or in refolding EAL, suggesting it may have chaperone activity. Overexpression of eutJ and eutS in E.coli leads to multiple BMC-like structures; eutS expression alone leads to 1 BMC-like structure per cell. Its function is as follows. Expression of the eut operon allows this bacteria to use ethanolamine (EA) as a carbon, nitrogen and energy source. It relies on cobalamin (vitamin B12) both as a cofactor for the ethanolamine ammonia-lyase (EAL) activity and to induce the operon. EA enhances bacterial survival in macrophages in a concentration-dependent manner, suggesting it is an important nutrient during infection. This chain is Ethanolamine utilization protein EutJ, found in Salmonella typhimurium (strain LT2 / SGSC1412 / ATCC 700720).